The chain runs to 572 residues: Probable pyruvate decarboxylase C186.09 (572 aa).

Substrate is bound by residues D38 and H125. Positions 400 to 482 (DSWFGGMRIT…FLINNRGYTI (83 aa)) are thiamine pyrophosphate binding. Positions 450, 477, and 479 each coordinate Mg(2+). Position 483 (E483) interacts with substrate.

The protein belongs to the TPP enzyme family. As to quaternary structure, homotetramer. A metal cation serves as cofactor. It depends on thiamine diphosphate as a cofactor.

The catalysed reaction is a 2-oxocarboxylate + H(+) = an aldehyde + CO2. In Schizosaccharomyces pombe (strain 972 / ATCC 24843) (Fission yeast), this protein is Probable pyruvate decarboxylase C186.09.